The sequence spans 1153 residues: AP-3 complex subunit delta-1 (1153 aa).

Residue Ala2 is modified to N-acetylalanine. 11 HEAT repeats span residues 34–71 (KYISQCIDEIKQELKQDNIAVKANAVCKLTYLQMLGYD), 77–114 (FNIIEVMSASKFTFKRIGYLAASQSFHEGTDVIMLTTN), 142–179 (DLARDLANDIMTLMSHTKPYIRKKAVLIMYKVFLKYPE), 180–216 (SLRPAFPRLKEKLEDPDPGVQSAAVNVICELARRNPK), 254–292 (RLGKKLIEPLTNLIHSTSAMSLLYECVNTVIAVLISLSS), 299–336 (ASIQLCVQKLRILIEDSDQNLKYLGLLAMSKILKTHPK), 338–373 (VQSHKDLILQCLDDKDESIRLRALDLLYGMVSKKNL), 375–409 (EIVKKLMTHVDKAEGTTYRDELLTKIIDICSQSNY), 431–468 (TRHGHLIAAQMLDVAIRVKAIRKFAVSQMSALLDSAHL), 497–535 (QEPHHTLEAMLRPRVTTLPGHIQAVYVQNVVKLYASILQ), and 548–585 (AVTQLMVDRLPQFVQSADLEVQERASCILQLVKHIQKL). Disordered regions lie at residues 629-696 (EPLS…YQDT) and 726-920 (KLEE…PPES). Phosphoserine is present on residues Ser632, Ser634, Ser636, and Ser658. Residues 639 to 675 (ERPRAVFHEEEQRRPKHRPSEADEEELARRREARKQE) show a composition bias toward basic and acidic residues. The stretch at 659–679 (EADEEELARRREARKQEQANN) forms a coiled coil. Ser688 carries the phosphoserine modification. Positions 725–756 (VKLEEERRHRQKLEKDKRRKKRKEKEKKGKRR) form a coiled coil. A compositionally biased stretch (basic and acidic residues) spans 726 to 740 (KLEEERRHRQKLEKD). A compositionally biased stretch (basic residues) spans 741–758 (KRRKKRKEKEKKGKRRHS). Ser758 and Ser759 each carry phosphoserine. Thr762 carries the post-translational modification Phosphothreonine. Phosphoserine occurs at positions 764, 785, 788, 828, and 829. Residues 777-794 (VTEEMPENALPSDEDDKD) show a composition bias toward acidic residues. Residues 795 to 839 (PNDPYRALDIDLDKPLADSEKLPIQKHRNTETSKSPEKDVPMVEK) show a composition bias toward basic and acidic residues. Composition is skewed to basic residues over residues 840 to 853 (KSKKPKKKEKKHKE) and 863 to 879 (EKEKKKSPKPKKKKHRK). The stretch at 845–869 (KKKEKKHKEKERDKEKKKEKEKKKS) forms a coiled coil. At Val931 the chain carries Phosphoserine.

It belongs to the adaptor complexes large subunit family. In terms of assembly, AP-3 associates with the BLOC-1 complex. Adaptor protein complex 3 (AP-3) is a heterotetramer composed of two large adaptins (delta-type subunit AP3D1 and beta-type subunit AP3B1 or AP3B2), a medium adaptin (mu-type subunit AP3M1 or AP3M2) and a small adaptin (sigma-type subunit APS1 or AP3S2). Interacts with SLC30A2. Interacts with CLN3 (via dileucine motif); this interaction facilitates lysosomal targeting. As to expression, present in all adult tissues examined with the highest levels in skeletal muscle, heart, pancreas and testis.

The protein localises to the cytoplasm. It localises to the golgi apparatus membrane. Its function is as follows. Part of the AP-3 complex, an adaptor-related complex which is not clathrin-associated. The complex is associated with the Golgi region as well as more peripheral structures. It facilitates the budding of vesicles from the Golgi membrane and may be directly involved in trafficking to lysosomes. Involved in process of CD8+ T-cell and NK cell degranulation. In concert with the BLOC-1 complex, AP-3 is required to target cargos into vesicles assembled at cell bodies for delivery into neurites and nerve terminals. This Homo sapiens (Human) protein is AP-3 complex subunit delta-1 (AP3D1).